Here is a 480-residue protein sequence, read N- to C-terminus: UDP-N-acetylmuramate--L-alanine ligase (480 aa).

Position 122 to 128 (122 to 128 (GTHGKTT)) interacts with ATP.

It belongs to the MurCDEF family.

It localises to the cytoplasm. The enzyme catalyses UDP-N-acetyl-alpha-D-muramate + L-alanine + ATP = UDP-N-acetyl-alpha-D-muramoyl-L-alanine + ADP + phosphate + H(+). Its pathway is cell wall biogenesis; peptidoglycan biosynthesis. Functionally, cell wall formation. The protein is UDP-N-acetylmuramate--L-alanine ligase of Pseudomonas aeruginosa (strain LESB58).